Here is a 390-residue protein sequence, read N- to C-terminus: Queuine tRNA-ribosyltransferase (390 aa).

D90 (proton acceptor) is an active-site residue. Residues 90–94 (DSGGF), D144, Q197, and G224 each bind substrate. The RNA binding stretch occupies residues 255-261 (GVGTPED). D274 serves as the catalytic Nucleophile. The RNA binding; important for wobble base 34 recognition stretch occupies residues 279–283 (TRNAR). Positions 312, 314, 317, and 354 each coordinate Zn(2+).

The protein belongs to the queuine tRNA-ribosyltransferase family. Homodimer. Within each dimer, one monomer is responsible for RNA recognition and catalysis, while the other monomer binds to the replacement base PreQ1. Requires Zn(2+) as cofactor.

The enzyme catalyses 7-aminomethyl-7-carbaguanine + guanosine(34) in tRNA = 7-aminomethyl-7-carbaguanosine(34) in tRNA + guanine. It functions in the pathway tRNA modification; tRNA-queuosine biosynthesis. In terms of biological role, catalyzes the base-exchange of a guanine (G) residue with the queuine precursor 7-aminomethyl-7-deazaguanine (PreQ1) at position 34 (anticodon wobble position) in tRNAs with GU(N) anticodons (tRNA-Asp, -Asn, -His and -Tyr). Catalysis occurs through a double-displacement mechanism. The nucleophile active site attacks the C1' of nucleotide 34 to detach the guanine base from the RNA, forming a covalent enzyme-RNA intermediate. The proton acceptor active site deprotonates the incoming PreQ1, allowing a nucleophilic attack on the C1' of the ribose to form the product. After dissociation, two additional enzymatic reactions on the tRNA convert PreQ1 to queuine (Q), resulting in the hypermodified nucleoside queuosine (7-(((4,5-cis-dihydroxy-2-cyclopenten-1-yl)amino)methyl)-7-deazaguanosine). The sequence is that of Queuine tRNA-ribosyltransferase from Leptothrix cholodnii (strain ATCC 51168 / LMG 8142 / SP-6) (Leptothrix discophora (strain SP-6)).